The sequence spans 391 residues: MRVIGLMSGTSYDAVEAAAADLELEGEALVMRPLGHLSAPYPDGLRDLIADSLPPAAATVRTVARLDTGIGQAFADVAVRAVRELCGGAAGLVVSHGQTLYHWVEDGAVRGTLQLGQPAWIAEATGLPVVSDLRGRDVAAGGQGAPLVAMTDVLAMAALPGVPAALNLGGIANVTVVAPGAEPLAFDTGPANALMDAAVRHFTGGAAAFDEDGRRAGAGRVDPGLLRVLLDDPYYGRPAPKSTGKEQFHLPYLLAALAAAPVAEPDDVLATLARLTAVTVADACRAHGVTRLVVSGGGARNPVLMGMIAEELPGVDLGSSDALGLPSDAKEALAFALLGFLTVNGLPGAIPSGTGARRASLLGSITPGREPLRLPEPAGEPPRVLRVVGGP.

9–16 (GTSYDAVE) serves as a coordination point for ATP.

This sequence belongs to the anhydro-N-acetylmuramic acid kinase family.

It carries out the reaction 1,6-anhydro-N-acetyl-beta-muramate + ATP + H2O = N-acetyl-D-muramate 6-phosphate + ADP + H(+). It participates in amino-sugar metabolism; 1,6-anhydro-N-acetylmuramate degradation. It functions in the pathway cell wall biogenesis; peptidoglycan recycling. Catalyzes the specific phosphorylation of 1,6-anhydro-N-acetylmuramic acid (anhMurNAc) with the simultaneous cleavage of the 1,6-anhydro ring, generating MurNAc-6-P. Is required for the utilization of anhMurNAc either imported from the medium or derived from its own cell wall murein, and thus plays a role in cell wall recycling. The sequence is that of Anhydro-N-acetylmuramic acid kinase from Streptomyces coelicolor (strain ATCC BAA-471 / A3(2) / M145).